The chain runs to 98 residues: Putative protein adenylyltransferase MJ1217 (98 aa).

The GSX(10)DXD motif motif lies at 31-45 (GSYAREEQKETSDID). Mg(2+) contacts are provided by Asp43, Asp45, and Asp75.

Belongs to the MntA antitoxin family. In terms of assembly, probably forms a complex with cognate toxin MJ1216. Mg(2+) is required as a cofactor.

It catalyses the reaction L-tyrosyl-[protein] + ATP = O-(5'-adenylyl)-L-tyrosyl-[protein] + diphosphate. The catalysed reaction is O-(5'-adenylyl)-L-tyrosyl-[protein] + ATP = O-[5'-(adenylyl-(5'-&gt;3')-adenylyl)]-L-tyrosyl-[protein] + diphosphate. In terms of biological role, probable antitoxin component of a putative type VII toxin-antitoxin (TA) system. Neutralizes cognate toxic MJ1216 by di-AMPylation. In Methanocaldococcus jannaschii (strain ATCC 43067 / DSM 2661 / JAL-1 / JCM 10045 / NBRC 100440) (Methanococcus jannaschii), this protein is Putative protein adenylyltransferase MJ1217.